The chain runs to 294 residues: Glycine--tRNA ligase alpha subunit (294 aa).

It belongs to the class-II aminoacyl-tRNA synthetase family. In terms of assembly, tetramer of two alpha and two beta subunits.

The protein resides in the cytoplasm. The enzyme catalyses tRNA(Gly) + glycine + ATP = glycyl-tRNA(Gly) + AMP + diphosphate. The protein is Glycine--tRNA ligase alpha subunit of Sulfurovum sp. (strain NBC37-1).